The following is an 88-amino-acid chain: Beta-insect excitatory toxin LqhIT1d (88 aa).

An N-terminal signal peptide occupies residues 1–18 (MKFFLLFLVVLPIMGVLG). Positions 20 to 83 (KNGFAVDSNG…ISDTRKKLCD (64 aa)) constitute an LCN-type CS-alpha/beta domain. 4 cysteine pairs are disulfide-bonded: Cys-34–Cys-55, Cys-40–Cys-60, Cys-44–Cys-62, and Cys-56–Cys-82.

It belongs to the long (4 C-C) scorpion toxin superfamily. Sodium channel inhibitor family. Beta subfamily. As to expression, expressed by the venom gland.

It is found in the secreted. Its function is as follows. Excitatory insect toxins induce a spastic paralysis. They bind voltage-independently at site-4 of sodium channels (Nav) and shift the voltage of activation toward more negative potentials thereby affecting sodium channel activation and promoting spontaneous and repetitive firing. The protein is Beta-insect excitatory toxin LqhIT1d of Leiurus hebraeus (Hebrew deathstalker scorpion).